We begin with the raw amino-acid sequence, 1053 residues long: Putative ABC transporter C family member 15 (1053 aa).

One can recognise an ABC transmembrane type-1 1 domain in the interval 1–180 (MSVDVQRITD…LPDLLSALVQ (180 aa)). Transmembrane regions (helical) follow at residues 11–31 (FIWY…AIYI), 36–56 (LGLG…CNYP), 125–145 (FILW…CMLM), and 151–171 (AGAV…IFGL). The ABC transporter 1 domain maps to 214-437 (VEIENGAFSW…NIGFEVLTQC (224 aa)). 249–256 (GAVGSGKS) contributes to the ATP binding site. The next 5 helical transmembrane spans lie at 481 to 503 (LLVP…SNYW), 523 to 543 (ILLV…ARTI), 595 to 615 (MAVK…TIFV), 714 to 734 (LSHF…EGVI), and 738 to 758 (IAGL…TVIW). One can recognise an ABC transmembrane type-1 2 domain in the interval 483 to 765 (VPFIILAQSC…VIWNICNAEN (283 aa)). An ABC transporter 2 domain is found at 804-1036 (FRDLQVRYAE…EDSFFSKLIK (233 aa)). ATP is bound at residue 836–843 (GRTGSGKS).

This sequence belongs to the ABC transporter superfamily. ABCC family. Conjugate transporter (TC 3.A.1.208) subfamily.

It is found in the membrane. The enzyme catalyses ATP + H2O + xenobioticSide 1 = ADP + phosphate + xenobioticSide 2.. Functionally, pump for glutathione S-conjugates. The protein is Putative ABC transporter C family member 15 (ABCC15) of Arabidopsis thaliana (Mouse-ear cress).